The following is a 590-amino-acid chain: AT-rich interactive domain-containing protein 5A (590 aa).

Residues 1 to 52 (MAAPPAKGNTEQSEEGDLPQLPVSPKPDDEQSRSQSPTQLQDSPEAGGEQEE) form a disordered region. An interaction with SOX9 region spans residues 1 to 294 (MAAPPAKGNT…NKDIQDSPQN (294 aa)). Position 24 is a phosphoserine (Ser24). Residues 33-42 (RSQSPTQLQD) are compositionally biased toward polar residues. Residues 50–142 (QEEEQAFLVS…LVLPYVRHLK (93 aa)) form the ARID domain. Glycyl lysine isopeptide (Lys-Gly) (interchain with G-Cter in ubiquitin) cross-links involve residues Lys80 and Lys89. The interval 141-229 (LKGEDDKPLP…SGPSPPLTGA (89 aa)) is disordered. Residues 160–186 (MAKELRGDDGTTEKLKKAKDSEERRVE) are compositionally biased toward basic and acidic residues. A compositionally biased stretch (polar residues) spans 187-210 (QTTPGKTKSDATGQTQLPCQGSSR). Phosphoserine occurs at positions 253 and 283. Disordered stretches follow at residues 275-323 (EGCR…RMEA), 367-402 (GPPG…TRKR), and 419-443 (VPTE…RGLE). Residues 367 to 381 (GPPGKEEGPTTKESH) are compositionally biased toward basic and acidic residues. Phosphoserine occurs at positions 433 and 458.

As to quaternary structure, interacts with SOX9. Interacts with ESR1. Interacts with RORC. Post-translationally, phosphorylated by MAPK14 on serine residues involving a TLR4 signaling pathway upon lipopolysaccharide (LPS) stimulation leading to its ubiquitination and proteasomal degradation. Ubiquitinated leading to proteasomal degradation; involving WWP1 linked to MAPK14-mediated phosphorylation upon LPS stimulation. In terms of tissue distribution, expressed in T cells (at protein level). Expressed at high levels in cartilage, heart, testis and bone.

Its subcellular location is the nucleus. Functionally, DNA-binding protein that may regulate transcription and act as a repressor by binding to AT-rich stretches in the promoter region of target genes. May positively regulate chondrocyte-specific transcription such as of COL2A1 in collaboration with SOX9 and positively regulate histone H3 acetylation at chondrocyte-specific genes. May stimulate early-stage chondrocyte differentiation and inhibit later stage differention. Can repress ESR1-mediated transcriptional activation; proposed to act as corepressor for selective nuclear hormone receptors. As an RNA-binding protein, involved in the regulation of inflammatory response by stabilizing selective inflammation-related mRNAs, such as STAT3 and TBX21. Also stabilizes IL6 mRNA. Binds to stem loop structures located in the 3'UTRs of IL6, STAT3 and TBX21 mRNAs; at least for STAT3 prevents binding of ZC3H12A to the mRNA stem loop structure thus inhibiting its degradation activity. Contributes to elevated IL6 levels possibly implicated in autoimmunity processes. IL6-dependent stabilization of STAT3 mRNA may promote differentiation of naive CD4+ T-cells into T-helper Th17 cells. In CD4+ T-cells may also inhibit RORC-induced Th17 cell differentiation independently of IL6 signaling. Stabilization of TBX21 mRNA contributes to elevated interferon-gamma secretion in Th1 cells possibly implicated in the establishment of septic shock. Stabilizes TNFRSF4/OX40 mRNA by binding to the conserved stem loop structure in its 3'UTR; thereby competing with the mRNA-destabilizing functions of RC3H1 and endoribonuclease ZC3H12A. This Mus musculus (Mouse) protein is AT-rich interactive domain-containing protein 5A (Arid5a).